Reading from the N-terminus, the 271-residue chain is Elongation factor Ts (271 aa).

Positions 76 to 79 (TDFV) are involved in Mg(2+) ion dislocation from EF-Tu.

Belongs to the EF-Ts family.

It is found in the cytoplasm. Its function is as follows. Associates with the EF-Tu.GDP complex and induces the exchange of GDP to GTP. It remains bound to the aminoacyl-tRNA.EF-Tu.GTP complex up to the GTP hydrolysis stage on the ribosome. This chain is Elongation factor Ts, found in Mycolicibacterium gilvum (strain PYR-GCK) (Mycobacterium gilvum (strain PYR-GCK)).